Reading from the N-terminus, the 1119-residue chain is Multiple epidermal growth factor-like domains protein 10 (1119 aa).

An N-terminal signal peptide occupies residues 1 to 22; the sequence is MMSSCGPLLLAVSCCLVALTSS. Residues 23 to 851 are Extracellular-facing; the sequence is LNLDDPNVCS…ALPMDSYQIG (829 aa). Residues 27–104 form the EMI domain; sequence DPNVCSHWES…FYESGDICVP (78 aa). 15 disulfides stabilise this stretch: cysteine 31-cysteine 92, cysteine 57-cysteine 66, cysteine 91-cysteine 102, cysteine 102-cysteine 115, cysteine 106-cysteine 121, cysteine 123-cysteine 132, cysteine 145-cysteine 157, cysteine 151-cysteine 164, cysteine 166-cysteine 175, cysteine 188-cysteine 200, cysteine 194-cysteine 207, cysteine 209-cysteine 218, cysteine 231-cysteine 243, cysteine 237-cysteine 250, and cysteine 252-cysteine 260. 4 consecutive EGF-like domains span residues 98–133, 141–176, 184–219, and 227–261; these read SGDI…ADCS, WGPH…WRCE, YGNN…AFCE, and HGQQ…MVCG. Residue asparagine 197 is glycosylated (N-linked (GlcNAc...) asparagine). The N-linked (GlcNAc...) asparagine glycan is linked to asparagine 272. EGF-like domains are found at residues 274–304 and 312–347; these read SQEC…ERCQ and YGIG…ESCE. Cystine bridges form between cysteine 277/cysteine 285, cysteine 279/cysteine 292, cysteine 294/cysteine 303, cysteine 316/cysteine 328, cysteine 322/cysteine 335, and cysteine 337/cysteine 346. Asparagine 369 and asparagine 393 each carry an N-linked (GlcNAc...) asparagine glycan. EGF-like domains lie at 401 to 436, 444 to 479, 487 to 522, 573 to 608, 616 to 653, 666 to 696, 709 to 739, 747 to 782, and 795 to 825; these read YGEA…SDCA, YGIN…VDCS, WGLG…DRCD, WGPN…TTCQ, FGHR…ALCN, GGSC…SDCS, IHTC…LYCT, YGKD…RHCE, and RQVC…TRCD. Intrachain disulfides connect cysteine 405–cysteine 417, cysteine 411–cysteine 424, and cysteine 426–cysteine 435. Asparagine 447 carries an N-linked (GlcNAc...) asparagine glycan. Cystine bridges form between cysteine 448–cysteine 460, cysteine 454–cysteine 467, cysteine 469–cysteine 478, cysteine 491–cysteine 503, cysteine 497–cysteine 510, and cysteine 512–cysteine 521. A glycan (N-linked (GlcNAc...) asparagine) is linked at asparagine 492. The N-linked (GlcNAc...) asparagine glycan is linked to asparagine 576. 18 cysteine pairs are disulfide-bonded: cysteine 577/cysteine 589, cysteine 583/cysteine 596, cysteine 598/cysteine 607, cysteine 620/cysteine 634, cysteine 624/cysteine 641, cysteine 643/cysteine 652, cysteine 669/cysteine 677, cysteine 671/cysteine 684, cysteine 686/cysteine 695, cysteine 712/cysteine 720, cysteine 714/cysteine 727, cysteine 729/cysteine 738, cysteine 751/cysteine 763, cysteine 757/cysteine 770, cysteine 772/cysteine 781, cysteine 798/cysteine 806, cysteine 800/cysteine 813, and cysteine 815/cysteine 824. A glycan (N-linked (GlcNAc...) asparagine) is linked at asparagine 674. N-linked (GlcNAc...) asparagine glycosylation occurs at asparagine 803. Residues 852 to 872 form a helical membrane-spanning segment; the sequence is AITGIIILVLLVLILLLLFII. At 873–1119 the chain is on the cytoplasmic side; the sequence is YRKKQKGKES…SSPSPTEDSK (247 aa).

The protein belongs to the MEGF family.

It localises to the cell membrane. Membrane receptor involved in phagocytosis by macrophages and astrocytes of apoptotic cells. Essential factor in the regulation of muscle development including myogenesis. Likely plays a key role in muscle cell proliferation, adhesion and motility. May control the balance between skeletal muscle satellite cells proliferation and differentiation through regulation of the notch signaling pathway. The polypeptide is Multiple epidermal growth factor-like domains protein 10 (Danio rerio (Zebrafish)).